The sequence spans 175 residues: Large ribosomal subunit protein eL14 (175 aa).

A disordered region spans residues 150–175; that stretch reads KAAKMDSTEGAKRRMQKAIAARKAKK. Basic and acidic residues predominate over residues 152–161; sequence AKMDSTEGAK. Over residues 162–175 the composition is skewed to basic residues; it reads RRMQKAIAARKAKK.

Belongs to the eukaryotic ribosomal protein eL14 family.

Its function is as follows. Component of the large ribosomal subunit. The ribosome is a large ribonucleoprotein complex responsible for the synthesis of proteins in the cell. This Leishmania donovani protein is Large ribosomal subunit protein eL14 (RPL14).